Reading from the N-terminus, the 293-residue chain is Light-independent protochlorophyllide reductase iron-sulfur ATP-binding protein (293 aa).

ATP-binding positions include Gly10 to Thr15 and Lys39. Ser14 lines the Mg(2+) pocket. Residues Cys95 and Cys129 each coordinate [4Fe-4S] cluster. Asn180 to Arg181 contacts ATP.

This sequence belongs to the NifH/BchL/ChlL family. As to quaternary structure, homodimer. Protochlorophyllide reductase is composed of three subunits; ChlL, ChlN and ChlB. [4Fe-4S] cluster is required as a cofactor.

It is found in the plastid. Its subcellular location is the chloroplast. The enzyme catalyses chlorophyllide a + oxidized 2[4Fe-4S]-[ferredoxin] + 2 ADP + 2 phosphate = protochlorophyllide a + reduced 2[4Fe-4S]-[ferredoxin] + 2 ATP + 2 H2O. It participates in porphyrin-containing compound metabolism; chlorophyll biosynthesis (light-independent). Its function is as follows. Component of the dark-operative protochlorophyllide reductase (DPOR) that uses Mg-ATP and reduced ferredoxin to reduce ring D of protochlorophyllide (Pchlide) to form chlorophyllide a (Chlide). This reaction is light-independent. The L component serves as a unique electron donor to the NB-component of the complex, and binds Mg-ATP. The chain is Light-independent protochlorophyllide reductase iron-sulfur ATP-binding protein from Adiantum capillus-veneris (Maidenhair fern).